We begin with the raw amino-acid sequence, 171 residues long: Translationally-controlled tumor protein homolog (171 aa).

One can recognise a TCTP domain in the interval 1 to 171 (MIIYRDCISQ…FKDGLEMEKC (171 aa)).

It belongs to the TCTP family. As to expression, expressed by the venom gland.

The protein resides in the secreted. Its function is as follows. Venom protein that causes edema, enhances vascular permeability and is likely related to the inflammatory activity of the venom. The protein is Translationally-controlled tumor protein homolog of Micrurus fulvius (Eastern coral snake).